The sequence spans 298 residues: GTPase Era (298 aa).

The Era-type G domain maps to 8–176 (RCGRIAVIGR…VSDLLALLPE (169 aa)). Positions 16–23 (GRPNVGKS) are G1. 16–23 (GRPNVGKS) is a binding site for GTP. Positions 42–46 (QTTRH) are G2. The tract at residues 63–66 (DTPG) is G3. GTP contacts are provided by residues 63–67 (DTPGL) and 125–128 (NKID). The interval 125–128 (NKID) is G4. A G5 region spans residues 155-157 (VSA). Positions 199–283 (VREQVMRQLG…FLETWVRVRK (85 aa)) constitute a KH type-2 domain.

This sequence belongs to the TRAFAC class TrmE-Era-EngA-EngB-Septin-like GTPase superfamily. Era GTPase family. As to quaternary structure, monomer.

Its subcellular location is the cytoplasm. The protein localises to the cell inner membrane. An essential GTPase that binds both GDP and GTP, with rapid nucleotide exchange. Plays a role in 16S rRNA processing and 30S ribosomal subunit biogenesis and possibly also in cell cycle regulation and energy metabolism. In Xylella fastidiosa (strain M12), this protein is GTPase Era.